Here is a 461-residue protein sequence, read N- to C-terminus: Nuclear distribution protein PAC1 (461 aa).

In terms of domain architecture, LisH spans 9–41 (QAEELHKSIIAYLTANNLLDTANTLRAELNLNE). The stretch at 61 to 88 (TSVVRLQKKIMDLESRMSAMQAELDNAT) forms a coiled coil. WD repeat units follow at residues 114–155 (SHRD…RTIK), 157–197 (HTRA…KNIR), 201–248 (GHDH…CLRT), 251–290 (GHTAWVRDVFPSPDGRFLLSTGDDSTARLWDISVSNPETK), 312–355 (QYLS…LLTL), 357–396 (GHDNWIRALAFHPGGKYLFSVSDDRTLRCWDLSQEGKCIK), 401–446 (AHER…IRCV), and 448–461 (ATGGVDMKLRIFAN).

This sequence belongs to the WD repeat LIS1/nudF family. As to quaternary structure, self-associates. Interacts with NDL1 and dynein.

The protein localises to the cytoplasm. It is found in the cytoskeleton. It localises to the spindle pole. In terms of biological role, positively regulates the activity of the minus-end directed microtubule motor protein dynein. May enhance dynein-mediated microtubule sliding by targeting dynein to the microtubule plus end. Required for nuclear migration during vegetative growth as well as development. Required for retrograde early endosome (EE) transport from the hyphal tip. Required for localization of dynein to the mitotic spindle poles. Recruits additional proteins to the dynein complex at SPBs. The sequence is that of Nuclear distribution protein PAC1 from Arthroderma benhamiae (strain ATCC MYA-4681 / CBS 112371) (Trichophyton mentagrophytes).